The chain runs to 504 residues: Activin receptor type-1-like (504 aa).

A signal peptide spans 1–20; that stretch reads MTLGIFRRVFLMLSVALGLT. The Extracellular segment spans residues 21-121; it reads KGDLVKPSRG…EEPEVDAHLP (101 aa). Asparagine 34 carries N-linked (GlcNAc...) asparagine glycosylation. 3 disulfides stabilise this stretch: cysteine 35–cysteine 52, cysteine 37–cysteine 42, and cysteine 47–cysteine 70. Residues 74 to 77 form a mediates specificity for BMP ligand region; sequence NQEL. Intrachain disulfides connect cysteine 78–cysteine 90 and cysteine 91–cysteine 96. Residue asparagine 99 is glycosylated (N-linked (GlcNAc...) asparagine). A helical membrane pass occupies residues 122–142; that stretch reads LILGPVLALLVLVALGTLGLW. Residues 143 to 504 lie on the Cytoplasmic side of the membrane; the sequence is RVRRRQEKQR…QNPEKPKVIH (362 aa). Residues serine 156, serine 161, and serine 162 each carry the phosphoserine modification. The GS domain maps to 173–202; sequence SMLGDFLVSDCTTGSGSGLPFLVQRTVARQ. The Protein kinase domain maps to 203–504; sequence VALVECVGKG…QNPEKPKVIH (302 aa). Residues 209–217 and lysine 230 contribute to the ATP site; that span reads VGKGRYGEV. Residue aspartate 331 is the Proton acceptor of the active site.

This sequence belongs to the protein kinase superfamily. TKL Ser/Thr protein kinase family. TGFB receptor subfamily. As to quaternary structure, interacts with TSC22D1/TSC-22. It depends on Mg(2+) as a cofactor. The cofactor is Mn(2+). Urogenital ridge, testis, ovary, brain and lung. In lung, found exclusively in pulmonary vessels of all sizes. Also expressed in aorta, vena cava and certain blood vessels of kidney, spleen, heart and intestine. For most blood vessels, a higher level of expression is found in endothelium than in adjacent smooth muscle.

Its subcellular location is the cell membrane. It catalyses the reaction L-threonyl-[receptor-protein] + ATP = O-phospho-L-threonyl-[receptor-protein] + ADP + H(+). The catalysed reaction is L-seryl-[receptor-protein] + ATP = O-phospho-L-seryl-[receptor-protein] + ADP + H(+). In terms of biological role, type I receptor for TGF-beta family ligands BMP9/GDF2 and BMP10 and important regulator of normal blood vessel development. On ligand binding, forms a receptor complex consisting of two type II and two type I transmembrane serine/threonine kinases. Type II receptors phosphorylate and activate type I receptors which autophosphorylate, then bind and activate SMAD transcriptional regulators. May bind activin as well. This Rattus norvegicus (Rat) protein is Activin receptor type-1-like (Acvrl1).